Consider the following 526-residue polypeptide: Probable feruloyl esterase B-2 (526 aa).

The signal sequence occupies residues 1–18; sequence MTKLSLLPLLTLASAVLA. Cystine bridges form between C27/C74 and C62/C113. Residue N52 is glycosylated (N-linked (GlcNAc...) asparagine). A glycan (N-linked (GlcNAc...) asparagine) is linked at N137. 4 disulfide bridges follow: C186/C441, C255/C272, C281/C291, and C503/C525. The Acyl-ester intermediate role is filled by S187. N233 is a glycosylation site (N-linked (GlcNAc...) asparagine). The Ca(2+) site is built by D256, D259, A261, D263, and I265. Residues D400 and H440 each act as charge relay system in the active site. N-linked (GlcNAc...) asparagine glycosylation occurs at N516.

Belongs to the tannase family.

It is found in the secreted. The catalysed reaction is feruloyl-polysaccharide + H2O = ferulate + polysaccharide.. Its function is as follows. Involved in degradation of plant cell walls. Hydrolyzes the feruloyl-arabinose ester bond in arabinoxylans as well as the feruloyl-galactose and feruloyl-arabinose ester bonds in pectin. This chain is Probable feruloyl esterase B-2 (faeB-2), found in Aspergillus fumigatus (strain ATCC MYA-4609 / CBS 101355 / FGSC A1100 / Af293) (Neosartorya fumigata).